Here is a 443-residue protein sequence, read N- to C-terminus: UDP-N-acetylmuramate--L-alanine ligase (443 aa).

ATP is bound at residue 110 to 116 (GAHGKTS).

Belongs to the MurCDEF family.

The protein localises to the cytoplasm. It catalyses the reaction UDP-N-acetyl-alpha-D-muramate + L-alanine + ATP = UDP-N-acetyl-alpha-D-muramoyl-L-alanine + ADP + phosphate + H(+). The protein operates within cell wall biogenesis; peptidoglycan biosynthesis. Its function is as follows. Cell wall formation. The chain is UDP-N-acetylmuramate--L-alanine ligase from Streptococcus suis (strain 98HAH33).